The primary structure comprises 410 residues: Translation initiation factor 2 subunit gamma (410 aa).

The 198-residue stretch at 6–203 (QSEVNIGMVG…AIQEFIPTPK (198 aa)) folds into the tr-type G domain. The segment at 15–22 (GHVDHGKT) is G1. 4 residues coordinate Mg(2+): D18, T22, G43, and S45. Residue 18–23 (DHGKTS) participates in GTP binding. The interval 43–47 (GISIR) is G2. Zn(2+) contacts are provided by C58, C61, C73, and C76. The interval 90–93 (DAPG) is G3. Residues 146–149 (NKID) and 181–183 (SAH) each bind GTP. Residues 146 to 149 (NKID) form a G4 region. Residues 181-183 (SAH) form a G5 region.

It belongs to the TRAFAC class translation factor GTPase superfamily. Classic translation factor GTPase family. EIF2G subfamily. Heterotrimer composed of an alpha, a beta and a gamma chain. It depends on Mg(2+) as a cofactor.

The enzyme catalyses GTP + H2O = GDP + phosphate + H(+). EIF-2 functions in the early steps of protein synthesis by forming a ternary complex with GTP and initiator tRNA. The sequence is that of Translation initiation factor 2 subunit gamma from Methanococcus maripaludis (strain C6 / ATCC BAA-1332).